The sequence spans 581 residues: Arginine--tRNA ligase (581 aa).

Positions 122–132 match the 'HIGH' region motif; it reads PNVAKPMHVGH.

Belongs to the class-I aminoacyl-tRNA synthetase family. As to quaternary structure, monomer.

The protein resides in the cytoplasm. The catalysed reaction is tRNA(Arg) + L-arginine + ATP = L-arginyl-tRNA(Arg) + AMP + diphosphate. The chain is Arginine--tRNA ligase from Francisella tularensis subsp. holarctica (strain FTNF002-00 / FTA).